Here is a 78-residue protein sequence, read N- to C-terminus: Large ribosomal subunit protein bL31 (78 aa).

The protein belongs to the bacterial ribosomal protein bL31 family. Type A subfamily. Part of the 50S ribosomal subunit.

Functionally, binds the 23S rRNA. The protein is Large ribosomal subunit protein bL31 (rpmE) of Rickettsia typhi (strain ATCC VR-144 / Wilmington).